The following is a 120-amino-acid chain: U13-lycotoxin-Ls1c (120 aa).

A signal peptide spans 1-16 (MKILFVLISILYAVYC). A propeptide spanning residues 17-54 (FSSEEDVDSAYLANELEPVEDINSEQYAALEPKEEQER) is cleaved from the precursor. Cystine bridges form between cysteine 56–cysteine 70, cysteine 69–cysteine 87, and cysteine 78–cysteine 85. Positions 56 to 95 (CADMGQDRKDDCDCCLNIATCNCWFGRYFCSCTFGDYQTC) constitute an Agouti domain.

Belongs to the neurotoxin 05 (agouti) family. Contains 5 disulfide bonds. In terms of tissue distribution, expressed by the venom gland.

Its subcellular location is the secreted. This is U13-lycotoxin-Ls1c from Lycosa singoriensis (Wolf spider).